The following is a 316-amino-acid chain: N-acetylmuramic acid 6-phosphate etherase (316 aa).

One can recognise an SIS domain in the interval 68-231 (ITDRLRSGGR…STCAMVRLGK (164 aa)). The active-site Proton donor is E96. E127 is a catalytic residue.

This sequence belongs to the GCKR-like family. MurNAc-6-P etherase subfamily. Homodimer.

It carries out the reaction N-acetyl-D-muramate 6-phosphate + H2O = N-acetyl-D-glucosamine 6-phosphate + (R)-lactate. It functions in the pathway amino-sugar metabolism; N-acetylmuramate degradation. Functionally, specifically catalyzes the cleavage of the D-lactyl ether substituent of MurNAc 6-phosphate, producing GlcNAc 6-phosphate and D-lactate. This is N-acetylmuramic acid 6-phosphate etherase from Prochlorococcus marinus (strain MIT 9313).